Here is a 98-residue protein sequence, read N- to C-terminus: Small ribosomal subunit protein uS19 (98 aa).

The disordered stretch occupies residues 77–98 (TRTYRGHAGGKAEKGGSAPKRK).

The protein belongs to the universal ribosomal protein uS19 family.

Protein S19 forms a complex with S13 that binds strongly to the 16S ribosomal RNA. This Prosthecochloris aestuarii (strain DSM 271 / SK 413) protein is Small ribosomal subunit protein uS19.